The chain runs to 250 residues: 1-(5-phosphoribosyl)-5-[(5-phosphoribosylamino)methylideneamino] imidazole-4-carboxamide isomerase (250 aa).

The Proton acceptor role is filled by Asp-8. The active-site Proton donor is Asp-129.

It belongs to the HisA/HisF family.

It is found in the cytoplasm. It carries out the reaction 1-(5-phospho-beta-D-ribosyl)-5-[(5-phospho-beta-D-ribosylamino)methylideneamino]imidazole-4-carboxamide = 5-[(5-phospho-1-deoxy-D-ribulos-1-ylimino)methylamino]-1-(5-phospho-beta-D-ribosyl)imidazole-4-carboxamide. It functions in the pathway amino-acid biosynthesis; L-histidine biosynthesis; L-histidine from 5-phospho-alpha-D-ribose 1-diphosphate: step 4/9. The polypeptide is 1-(5-phosphoribosyl)-5-[(5-phosphoribosylamino)methylideneamino] imidazole-4-carboxamide isomerase (Desulfovibrio desulfuricans (strain ATCC 27774 / DSM 6949 / MB)).